Reading from the N-terminus, the 475-residue chain is Putative aldehyde dehydrogenase SH0913 (475 aa).

An NAD(+)-binding site is contributed by 201–207; the sequence is GDGEGVG. Catalysis depends on residues Glu-245 and Cys-279.

Belongs to the aldehyde dehydrogenase family.

It catalyses the reaction an aldehyde + NAD(+) + H2O = a carboxylate + NADH + 2 H(+). The chain is Putative aldehyde dehydrogenase SH0913 from Staphylococcus haemolyticus (strain JCSC1435).